We begin with the raw amino-acid sequence, 559 residues long: MLKCIAAVGTVVWMTMFLFLYSQLSNNQSGGDSIRAWRQTKEAIDKLQEQNEDLKSILEKERQERNDQHKKIMEQSHQLPPNPENPSLPKPEPVKEIISKPSILGPVQQEVQKRMLDDRIREMFYLLHSQTIENSTKILLETQMISLMGLSAQLEKLEGSEEERFKQRTAITQRIFKSIEKLQNPKACSEAKTLVCNLDKECGFGCQLHHVTYCAITAFATQRMMVLKRDGSSWKYSSHGWTSVFKKLSKCSFDEAVGNTEAKPFAEPSPARVVSLGIVDSLITKPTFLPQAVPEQLLESLTSLHSHPPAFFVGTFISYLMRFNSATQEKLDKALKSIPLDKGPIVGLQIRRTDKVGTEAAFHALKEYMEWTEIWFKVEEKRQGKPLERRIFIASDDPTVVPEAKNDYPNYEVYGSTEIAKTAQLNNRYTDASLMGVITDIYILSKVNYLVCTFSSQVCRMGYELRQPSGADDGSKFHSLDDIYYFGGQQAHEVIVIEDHIAQNNKEIDLKVGDKVGIAGNHWNGYSKGTNRQTYKEGVFPSYKVVNDWRKFKFEALLD.

At 1-4 the chain is on the cytoplasmic side; that stretch reads MLKC. The chain crosses the membrane as a helical; Signal-anchor for type II membrane protein span at residues 5 to 24; that stretch reads IAAVGTVVWMTMFLFLYSQL. Topologically, residues 25-559 are lumenal; sequence SNNQSGGDSI…RKFKFEALLD (535 aa). N-linked (GlcNAc...) asparagine glycosylation is present at N27. Basic and acidic residues predominate over residues 63 to 74; sequence QERNDQHKKIME. Residues 63-90 are disordered; it reads QERNDQHKKIMEQSHQLPPNPENPSLPK. A compositionally biased stretch (pro residues) spans 80–90; that stretch reads PPNPENPSLPK. N134 is a glycosylation site (N-linked (GlcNAc...) asparagine). Disulfide bonds link C188-C251, C196-C214, and C202-C206. The GT23 domain maps to 190 to 480; it reads EAKTLVCNLD…ADDGSKFHSL (291 aa). An important for donor substrate binding region spans residues 351-352; sequence RR. Cysteines 452 and 459 form a disulfide. The SH3 domain maps to 489 to 550; sequence QQAHEVIVIE…PSYKVVNDWR (62 aa).

The protein belongs to the glycosyltransferase 23 family. Requires Mn(2+) as cofactor. It depends on Mg(2+) as a cofactor.

It is found in the golgi apparatus. The protein resides in the golgi stack membrane. It catalyses the reaction N(4)-{beta-D-GlcNAc-(1-&gt;2)-alpha-D-Man-(1-&gt;3)-[beta-D-GlcNAc-(1-&gt;2)-alpha-D-Man-(1-&gt;6)]-beta-D-Man-(1-&gt;4)-beta-D-GlcNAc-(1-&gt;4)-beta-D-GlcNAc}-L-asparaginyl-[protein] + GDP-beta-L-fucose = an N(4)-{beta-D-GlcNAc-(1-&gt;2)-alpha-D-Man-(1-&gt;3)-[beta-D-GlcNAc-(1-&gt;2)-alpha-D-Man-(1-&gt;6)]-beta-D-Man-(1-&gt;4)-beta-D-GlcNAc-(1-&gt;4)-[alpha-L-Fuc-(1-&gt;6)]-beta-D-GlcNAc}-L-asparaginyl-[protein] + GDP + H(+). The protein operates within protein modification; protein glycosylation. Inhibited by Fe(3+), Ni(2+) and Cu(2+). In terms of biological role, catalyzes the addition of fucose in alpha 1-6 linkage to the first GlcNAc residue, next to the peptide chains in N-glycans. The addition is prevented if the GlcNAc residue is already fucosylated. Involved in susceptibility to the nematotoxic C.cinerea galectin Cgl2, likely by contributing to the synthesis of core alpha-1,6-fucosylated N-glycans to which Cgl2 binds. This chain is Alpha-(1,6)-fucosyltransferase, found in Caenorhabditis elegans.